The primary structure comprises 117 residues: Ribosome-binding factor A (117 aa).

This sequence belongs to the RbfA family. As to quaternary structure, monomer. Binds 30S ribosomal subunits, but not 50S ribosomal subunits or 70S ribosomes.

The protein localises to the cytoplasm. Its function is as follows. One of several proteins that assist in the late maturation steps of the functional core of the 30S ribosomal subunit. Associates with free 30S ribosomal subunits (but not with 30S subunits that are part of 70S ribosomes or polysomes). Required for efficient processing of 16S rRNA. May interact with the 5'-terminal helix region of 16S rRNA. The chain is Ribosome-binding factor A from Blochmanniella floridana.